Reading from the N-terminus, the 317-residue chain is Apolipoprotein E (317 aa).

Residues 1 to 18 (MKVLWAALLVTFLAGCQA) form the signal peptide. A run of 8 repeats spans residues 80-101 (TLMDETMKELKAYKSELEEQLS), 102-123 (PVAEETRARLSKELQAAQARLG), 124-145 (ADMEDVRSRLVQYRGEVQAMLG), 146-167 (QSTEELRARLASHLRKLRKRLL), 168-189 (RDADDLQKRLAVYQAGAREGAE), 190-211 (RGVSAIRERLGPLVEQGRVRAA), 212-233 (TVGSLAGQPLQERAQAWGERLR), and 234-255 (ARMEEVGSRTRDRLDEVKEQVA). Residues 80–255 (TLMDETMKEL…RLDEVKEQVA (176 aa)) are 8 X 22 AA approximate tandem repeats. Residue Met143 is modified to Methionine sulfoxide. Ser147 bears the Phosphoserine mark. The LDL and other lipoprotein receptors binding stretch occupies residues 158 to 168 (HLRKLRKRLLR). Heparin is bound at residue 162 to 165 (LRKR). Positions 210–290 (AATVGSLAGQ…SWFEPLVEDM (81 aa)) are lipid-binding and lipoprotein association. Thr212 carries O-linked (GalNAc...) threonine glycosylation. 229–236 (GERLRARM) contributes to the heparin binding site. The tract at residues 266–317 (QQISLQAEAFQARLKSWFEPLVEDMQRQWAGLVEKVQAAVGASTAPVPSDNH) is homooligomerization. A specificity for association with VLDL region spans residues 278 to 290 (RLKSWFEPLVEDM).

The protein belongs to the apolipoprotein A1/A4/E family. As to quaternary structure, homotetramer. May interact with ABCA1; functionally associated with ABCA1 in the biogenesis of HDLs. May interact with APP/A4 amyloid-beta peptide; the interaction is extremely stable in vitro but its physiological significance is unclear. May interact with MAPT. May interact with MAP2. In the cerebrospinal fluid, interacts with secreted SORL1. Interacts with PMEL; this allows the loading of PMEL luminal fragment on ILVs to induce fibril nucleation. In terms of processing, APOE exists as multiple glycosylated and sialylated glycoforms within cells and in plasma. The extent of glycosylation and sialylation are tissue and context specific. Post-translationally, glycated in plasma VLDL. Phosphorylated by FAM20C in the extracellular medium.

Its subcellular location is the secreted. It localises to the extracellular space. It is found in the extracellular matrix. The protein localises to the extracellular vesicle. The protein resides in the endosome. Its subcellular location is the multivesicular body. Its function is as follows. APOE is an apolipoprotein, a protein associating with lipid particles, that mainly functions in lipoprotein-mediated lipid transport between organs via the plasma and interstitial fluids. APOE is a core component of plasma lipoproteins and is involved in their production, conversion and clearance. Apolipoproteins are amphipathic molecules that interact both with lipids of the lipoprotein particle core and the aqueous environment of the plasma. As such, APOE associates with chylomicrons, chylomicron remnants, very low density lipoproteins (VLDL) and intermediate density lipoproteins (IDL) but shows a preferential binding to high-density lipoproteins (HDL). It also binds a wide range of cellular receptors including the LDL receptor/LDLR, the LDL receptor-related proteins LRP1, LRP2 and LRP8 and the very low-density lipoprotein receptor/VLDLR that mediate the cellular uptake of the APOE-containing lipoprotein particles. Finally, APOE also has a heparin-binding activity and binds heparan-sulfate proteoglycans on the surface of cells, a property that supports the capture and the receptor-mediated uptake of APOE-containing lipoproteins by cells. A main function of APOE is to mediate lipoprotein clearance through the uptake of chylomicrons, VLDLs, and HDLs by hepatocytes. APOE is also involved in the biosynthesis by the liver of VLDLs as well as their uptake by peripheral tissues ensuring the delivery of triglycerides and energy storage in muscle, heart and adipose tissues. By participating in the lipoprotein-mediated distribution of lipids among tissues, APOE plays a critical role in plasma and tissues lipid homeostasis. APOE is also involved in two steps of reverse cholesterol transport, the HDLs-mediated transport of cholesterol from peripheral tissues to the liver, and thereby plays an important role in cholesterol homeostasis. First, it is functionally associated with ABCA1 in the biogenesis of HDLs in tissues. Second, it is enriched in circulating HDLs and mediates their uptake by hepatocytes. APOE also plays an important role in lipid transport in the central nervous system, regulating neuron survival and sprouting. The chain is Apolipoprotein E (APOE) from Rhinopithecus roxellana (Golden snub-nosed monkey).